Here is a 454-residue protein sequence, read N- to C-terminus: Phosphoglucosamine mutase (454 aa).

The active-site Phosphoserine intermediate is Ser-102. The Mg(2+) site is built by Ser-102, Asp-247, Asp-249, and Asp-251. The residue at position 102 (Ser-102) is a Phosphoserine.

This sequence belongs to the phosphohexose mutase family. The cofactor is Mg(2+). In terms of processing, activated by phosphorylation.

The enzyme catalyses alpha-D-glucosamine 1-phosphate = D-glucosamine 6-phosphate. Functionally, catalyzes the conversion of glucosamine-6-phosphate to glucosamine-1-phosphate. The protein is Phosphoglucosamine mutase of Kineococcus radiotolerans (strain ATCC BAA-149 / DSM 14245 / SRS30216).